A 533-amino-acid polypeptide reads, in one-letter code: Putative sel1-like repeat-containing protein L21 (533 aa).

5 Sel1-like repeats span residues 105–140 (VLSQ…NQGL), 141–172 (SFAQ…QSGY), 173–206 (YLSN…NQGC), 207–242 (NISQ…KQGN), and 243–278 (YFSQ…NCGH).

The sequence is that of Putative sel1-like repeat-containing protein L21 from Acanthamoeba polyphaga mimivirus (APMV).